Consider the following 197-residue polypeptide: Transmembrane 4 L6 family member 5 (197 aa).

Topologically, residues 1-9 are cytoplasmic; sequence MCTGKCARC. A helical membrane pass occupies residues 10 to 30; the sequence is VGLSLITLCLVCIVANALLLV. At 31–46 the chain is on the extracellular side; the sequence is PNGETSWTNTNHLSLQ. Residues 47–67 form a helical membrane-spanning segment; sequence VWLMGGFIGGGLMVLCPGIAA. Residues 68 to 90 lie on the Cytoplasmic side of the membrane; sequence VRAGGKGCCGAGCCGNRCRMLRS. The helical transmembrane segment at 91 to 111 threads the bilayer; it reads VFSSAFGVLGAIYCLSVSGAG. The tract at residues 91-197 is interaction with MTOR and CASTOR1; it reads VFSSAFGVLG…DCRKKQDTPH (107 aa). At 112–157 the chain is on the extracellular side; sequence LRNGPRCLMNGEWGYHFEDTAGAYLLNRTLWDRCEAPPRVVPWNVT. Residue 124–129 coordinates L-arginine; it reads WGYHFE. 2 N-linked (GlcNAc...) asparagine glycosylation sites follow: Asn138 and Asn155. The helical transmembrane segment at 158–178 threads the bilayer; it reads LFSLLVAASCLEIVLCGIQLV. Residues 179–197 are Cytoplasmic-facing; the sequence is NATIGVFCGDCRKKQDTPH.

It belongs to the L6 tetraspanin family. Interacts with MTOR; the interaction is positively regulated by arginine and is negatively regulated by leucine. Interacts with SLC38A9. Interacts with SLC7A1; the interaction is negatively regulated by arginine. Interacts with CASTOR1; the interaction is positively regulated by leucine and is negatively regulated by arginine. In terms of tissue distribution, intestine. Overexpressed in pancreatic cancers.

The protein localises to the lysosome membrane. It localises to the cell membrane. In terms of biological role, acts as a lysosomal membrane arginine sensor. Forms a complex with MTOR and SLC38A9 on lysosomal membranes in an arginine-regulated manner, leading to arginine efflux which enables the activation of mTORC1 which subsequently leads to RPS6KB1 and EIF4EBP1 phosphorylations. Facilitates cell cycle G1/S phase progression and the translocation of the CDK4-CCND1 complex into the nucleus. CDKN1B and RHOA/ROCK signaling activity are involved in TM4SF5-mediated acceleration of G1/S phase progression. This Homo sapiens (Human) protein is Transmembrane 4 L6 family member 5 (TM4SF5).